A 120-amino-acid polypeptide reads, in one-letter code: Ribonuclease P protein component 4 (120 aa).

Residues Cys67, Cys70, Cys96, and Cys99 each coordinate Zn(2+).

This sequence belongs to the eukaryotic/archaeal RNase P protein component 4 family. As to quaternary structure, consists of a catalytic RNA component and at least 4-5 protein subunits. The cofactor is Zn(2+).

It localises to the cytoplasm. It catalyses the reaction Endonucleolytic cleavage of RNA, removing 5'-extranucleotides from tRNA precursor.. Its function is as follows. Part of ribonuclease P, a protein complex that generates mature tRNA molecules by cleaving their 5'-ends. In Thermococcus sibiricus (strain DSM 12597 / MM 739), this protein is Ribonuclease P protein component 4.